A 55-amino-acid chain; its full sequence is Large ribosomal subunit protein bL33A (55 aa).

This sequence belongs to the bacterial ribosomal protein bL33 family.

The polypeptide is Large ribosomal subunit protein bL33A (Salinispora tropica (strain ATCC BAA-916 / DSM 44818 / JCM 13857 / NBRC 105044 / CNB-440)).